The chain runs to 164 residues: Putative 4-hydroxy-4-methyl-2-oxoglutarate aldolase (164 aa).

Residues 74-77 (GGNL) and R96 contribute to the substrate site. D97 serves as a coordination point for a divalent metal cation.

Belongs to the class II aldolase/RraA-like family. In terms of assembly, homotrimer. A divalent metal cation serves as cofactor.

It catalyses the reaction 4-hydroxy-4-methyl-2-oxoglutarate = 2 pyruvate. It carries out the reaction oxaloacetate + H(+) = pyruvate + CO2. Functionally, catalyzes the aldol cleavage of 4-hydroxy-4-methyl-2-oxoglutarate (HMG) into 2 molecules of pyruvate. Also contains a secondary oxaloacetate (OAA) decarboxylase activity due to the common pyruvate enolate transition state formed following C-C bond cleavage in the retro-aldol and decarboxylation reactions. The sequence is that of Putative 4-hydroxy-4-methyl-2-oxoglutarate aldolase from Thermus thermophilus (strain ATCC BAA-163 / DSM 7039 / HB27).